Reading from the N-terminus, the 150-residue chain is Lymphocyte antigen 6 complex locus protein G5c (150 aa).

The N-terminal stretch at 1-41 is a signal peptide; the sequence is MRFMAGPAGSQSLGPLCFHSSPQALYTVLLIVLVMMSLVFG. One can recognise a UPAR/Ly6 domain in the interval 60–150; the sequence is LRCYRCLLET…DPQNRGLYTP (91 aa). 4 disulfide bridges follow: cysteine 62/cysteine 89, cysteine 65/cysteine 74, cysteine 81/cysteine 107, and cysteine 134/cysteine 139. The N-linked (GlcNAc...) asparagine glycan is linked to asparagine 96.

In terms of assembly, forms oligomers. Post-translationally, N-glycosylated. Detected in T-cell lines and fetal and adult lung.

The protein resides in the secreted. Functionally, may have a role in hematopoietic cell differentiation. This chain is Lymphocyte antigen 6 complex locus protein G5c (LY6G5C), found in Homo sapiens (Human).